The following is a 101-amino-acid chain: DNA-binding protein HU (101 aa).

Belongs to the bacterial histone-like protein family. In terms of assembly, homodimer.

Functionally, histone-like DNA-binding protein which is capable of wrapping DNA to stabilize it, and thus to prevent its denaturation under extreme environmental conditions. The sequence is that of DNA-binding protein HU (hup) from Rickettsia bellii (strain RML369-C).